Here is a 272-residue protein sequence, read N- to C-terminus: Acetylglutamate kinase (272 aa).

Substrate is bound by residues 46–47, R68, and N166; that span reads GA.

It belongs to the acetylglutamate kinase family. ArgB subfamily.

The protein localises to the cytoplasm. The catalysed reaction is N-acetyl-L-glutamate + ATP = N-acetyl-L-glutamyl 5-phosphate + ADP. Its pathway is amino-acid biosynthesis; L-arginine biosynthesis; N(2)-acetyl-L-ornithine from L-glutamate: step 2/4. Catalyzes the ATP-dependent phosphorylation of N-acetyl-L-glutamate. The polypeptide is Acetylglutamate kinase (Dehalococcoides mccartyi (strain CBDB1)).